We begin with the raw amino-acid sequence, 1303 residues long: MLDVNFFDELRIGLATADDIRQWSYGEVKKPETINYRTLKPEKDGLFCEKIFGPTRDWECYCGKYKRVRFKGIICERCGVEVTRAKVRRERMGHIELAASVTHIWYFKGVPSRLGYLLDLAPKDLEKIIYFAAYVITSVNTEMRHNEMSTLEAEIGVERKQIADQRDADLEARAQKLEADLAELEQEGAKSDVRRKVKEGGEREMRQLRDRAQRELDKLDEIWETFTKLEPRQLIADELLYRELYDRFGEYFTGGMGAESIQALLQDFDINAEADQLRETIRSGKGQKKLRALKRLKVVAAFQATGNNPSGMVLNCVPVIPPDLRPMVQLDGGRFATSDLNDLYRRVINRNNRLKRLIDLGAPEIIVNNEKRMLQESVDALFDNGRRGRPVTGPGNRPLKSLSDLLKGKQGRFRQNLLGKRVDYSGRSVIVVGPQLKLHQCGLPKEMAVELFKPFVMKRLVDLNHAQNIKSAKRMVERQRPQVWDVLEEVIAEHPVLLNRAPTLHRLGIQAFEPQLVEGKAIQLHPLVCEAFNADFDGDQMAVHLPLSAEAQAEARILMLSSNNILSPASGRPLAMPRLDMVTGLYHLTRQLDGAKGEGQSFSSVGEAIMAFDRGGLDLQAKVKIRVRDLVPNAEQRPEDWEPGQPWLAETTLGRVWFNELLPEDYPFVNDLLPKKRQAAIVNDLAERYPMVTVAQTLDKLKDAGFHWATRSGVTVSISDVVVPPNKTEILDGYEAKADQVEKRYRRGALSYQERNAELVKVWTAAKDEVAEAMEANFPEDNSISMIVKSGAAGNMTQVVQLAGMRGLVSNPKGEYIPRPIKANFREGLSVLEYFISNHGARKGLADTALRTADSGYLTRRLVDVSQDVIVRETDCGTERGIRMPIAEKLPDGKLLRDAHVETSVYARTTAEDVTDSDGNVVLARGSDLGDPAIEKLLAAGVTKVKVRSVLTCESGVGVCAVCYGRSMATGKLVDVGEAVGIVAAQSIGEPGTQLTMRTFHQGGVAGDDITTGLPRVQELFEARVPKGKAPIADAPGRIRMEDNDRYWKITIIPDDGSEEIVYDKLSKRQRLAAISVDGTERQITDGDHVDVGQQLLEGAVDPHEVLRVMGPREAQLHLVREVQEVYRSQGVGIHDKHVEVIVRQMLRRVIIIDSGATEFLPGSPVERSQFEGENRRVVAEGGDPASGRPVLMGITKASLATESWLSAASFQETTRILTNAAIEGASDKLVGLKENVIIGKLIPAGTGINRYRNIQVQPTEEARAAAYAIPSYDDGYYTPDVFGTGTGAAVPLDDYDFGRDYR.

Zn(2+)-binding residues include C60, C62, C75, and C78. Residues D535, D537, and D539 each contribute to the Mg(2+) site. 4 residues coordinate Zn(2+): C876, C953, C960, and C963.

It belongs to the RNA polymerase beta' chain family. The RNAP catalytic core consists of 2 alpha, 1 beta, 1 beta' and 1 omega subunit. When a sigma factor is associated with the core the holoenzyme is formed, which can initiate transcription. Mg(2+) is required as a cofactor. The cofactor is Zn(2+).

It catalyses the reaction RNA(n) + a ribonucleoside 5'-triphosphate = RNA(n+1) + diphosphate. Functionally, DNA-dependent RNA polymerase catalyzes the transcription of DNA into RNA using the four ribonucleoside triphosphates as substrates. The chain is DNA-directed RNA polymerase subunit beta' from Saccharopolyspora erythraea (strain ATCC 11635 / DSM 40517 / JCM 4748 / NBRC 13426 / NCIMB 8594 / NRRL 2338).